We begin with the raw amino-acid sequence, 281 residues long: NADPH-dependent 7-cyano-7-deazaguanine reductase (281 aa).

Residue 87–89 (IES) coordinates substrate. 89–90 (SK) contacts NADPH. Residue C188 is the Thioimide intermediate of the active site. The active-site Proton donor is the D195. 227-228 (HE) serves as a coordination point for substrate. 256 to 257 (RG) contacts NADPH. The segment at 261-281 (INPYRSTEQAKPDHNHRMARQ) is disordered. Residues 268 to 281 (EQAKPDHNHRMARQ) are compositionally biased toward basic and acidic residues.

Belongs to the GTP cyclohydrolase I family. QueF type 2 subfamily. As to quaternary structure, homodimer.

The protein localises to the cytoplasm. It carries out the reaction 7-aminomethyl-7-carbaguanine + 2 NADP(+) = 7-cyano-7-deazaguanine + 2 NADPH + 3 H(+). Its pathway is tRNA modification; tRNA-queuosine biosynthesis. Catalyzes the NADPH-dependent reduction of 7-cyano-7-deazaguanine (preQ0) to 7-aminomethyl-7-deazaguanine (preQ1). This chain is NADPH-dependent 7-cyano-7-deazaguanine reductase, found in Vibrio vulnificus (strain CMCP6).